The primary structure comprises 445 residues: Tubulin beta-3 chain (445 aa).

Positions 11, 69, 138, 142, 143, 144, 204, and 226 each coordinate GTP. Residue Glu69 participates in Mg(2+) binding. The span at 417–426 shows a compositional bias: polar residues; that stretch reads DLVSEYQQYQ. Residues 417–445 form a disordered region; that stretch reads DLVSEYQQYQEASADDEADEFDEEEGDEE. Over residues 429-445 the composition is skewed to acidic residues; it reads SADDEADEFDEEEGDEE.

This sequence belongs to the tubulin family. As to quaternary structure, dimer of alpha and beta chains. A typical microtubule is a hollow water-filled tube with an outer diameter of 25 nm and an inner diameter of 15 nM. Alpha-beta heterodimers associate head-to-tail to form protofilaments running lengthwise along the microtubule wall with the beta-tubulin subunit facing the microtubule plus end conferring a structural polarity. Microtubules usually have 13 protofilaments but different protofilament numbers can be found in some organisms and specialized cells. Mg(2+) serves as cofactor.

It localises to the cytoplasm. Its subcellular location is the cytoskeleton. In terms of biological role, tubulin is the major constituent of microtubules, a cylinder consisting of laterally associated linear protofilaments composed of alpha- and beta-tubulin heterodimers. Microtubules grow by the addition of GTP-tubulin dimers to the microtubule end, where a stabilizing cap forms. Below the cap, tubulin dimers are in GDP-bound state, owing to GTPase activity of alpha-tubulin. The protein is Tubulin beta-3 chain (TUBB3) of Oomycete-like sp. (strain MacKay2000).